A 177-amino-acid chain; its full sequence is MAKRWYVVHAYSGYEKHVMRSLIERVKLAGMEEEFGEILVPTEEVVEMRNGQKRKSERKFFPGYVLVQMEMNEGTWHLVKDTPRVMGFIGGTADKPAPITDREADAILRRVADSGDKPKPKTLFEPGETVRVIDGPFADFNGVVEEVNYEKSRIQVAVLIFGRSTPVELEFSQVEKV.

The KOW domain maps to 126-156 (PGETVRVIDGPFADFNGVVEEVNYEKSRIQV).

The protein belongs to the NusG family.

Functionally, participates in transcription elongation, termination and antitermination. In Pseudomonas aeruginosa (strain ATCC 15692 / DSM 22644 / CIP 104116 / JCM 14847 / LMG 12228 / 1C / PRS 101 / PAO1), this protein is Transcription termination/antitermination protein NusG.